Consider the following 67-residue polypeptide: Large ribosomal subunit protein uL29 (67 aa).

The protein belongs to the universal ribosomal protein uL29 family.

This Rubrobacter xylanophilus (strain DSM 9941 / JCM 11954 / NBRC 16129 / PRD-1) protein is Large ribosomal subunit protein uL29.